The chain runs to 242 residues: Protein crossbronx (242 aa).

Residues glutamine 20 to alanine 176 form the UBC core domain.

Belongs to the ubiquitin-conjugating enzyme family. FTS subfamily.

This is Protein crossbronx (cbx) from Drosophila ananassae (Fruit fly).